Here is a 120-residue protein sequence, read N- to C-terminus: Large ribosomal subunit protein uL18 (120 aa).

Belongs to the universal ribosomal protein uL18 family. In terms of assembly, part of the 50S ribosomal subunit; part of the 5S rRNA/L5/L18/L25 subcomplex. Contacts the 5S and 23S rRNAs.

This is one of the proteins that bind and probably mediate the attachment of the 5S RNA into the large ribosomal subunit, where it forms part of the central protuberance. The polypeptide is Large ribosomal subunit protein uL18 (Methylobacterium radiotolerans (strain ATCC 27329 / DSM 1819 / JCM 2831 / NBRC 15690 / NCIMB 10815 / 0-1)).